The chain runs to 210 residues: Pyridoxine/pyridoxamine 5'-phosphate oxidase (210 aa).

Residues 7–10 (RQSY) and lysine 65 each bind substrate. FMN contacts are provided by residues 60–65 (RIVLIK), 75–76 (YT), arginine 81, lysine 82, and glutamine 104. The substrate site is built by tyrosine 122, arginine 126, and serine 130. Residues 139-140 (QS) and tryptophan 182 each bind FMN. 188 to 190 (RLH) is a binding site for substrate. Arginine 192 is an FMN binding site.

This sequence belongs to the pyridoxamine 5'-phosphate oxidase family. Homodimer. It depends on FMN as a cofactor.

It carries out the reaction pyridoxamine 5'-phosphate + O2 + H2O = pyridoxal 5'-phosphate + H2O2 + NH4(+). It catalyses the reaction pyridoxine 5'-phosphate + O2 = pyridoxal 5'-phosphate + H2O2. It functions in the pathway cofactor metabolism; pyridoxal 5'-phosphate salvage; pyridoxal 5'-phosphate from pyridoxamine 5'-phosphate: step 1/1. The protein operates within cofactor metabolism; pyridoxal 5'-phosphate salvage; pyridoxal 5'-phosphate from pyridoxine 5'-phosphate: step 1/1. Functionally, catalyzes the oxidation of either pyridoxine 5'-phosphate (PNP) or pyridoxamine 5'-phosphate (PMP) into pyridoxal 5'-phosphate (PLP). The sequence is that of Pyridoxine/pyridoxamine 5'-phosphate oxidase from Bordetella petrii (strain ATCC BAA-461 / DSM 12804 / CCUG 43448).